The primary structure comprises 62 residues: Large ribosomal subunit protein uL30 (62 aa).

This sequence belongs to the universal ribosomal protein uL30 family. Part of the 50S ribosomal subunit.

The polypeptide is Large ribosomal subunit protein uL30 (Gluconobacter oxydans (strain 621H) (Gluconobacter suboxydans)).